We begin with the raw amino-acid sequence, 174 residues long: Endoribonuclease YbeY (174 aa).

The Zn(2+) site is built by histidine 129, histidine 133, and histidine 139.

It belongs to the endoribonuclease YbeY family. The cofactor is Zn(2+).

The protein resides in the cytoplasm. In terms of biological role, single strand-specific metallo-endoribonuclease involved in late-stage 70S ribosome quality control and in maturation of the 3' terminus of the 16S rRNA. The chain is Endoribonuclease YbeY from Lactobacillus delbrueckii subsp. bulgaricus (strain ATCC BAA-365 / Lb-18).